We begin with the raw amino-acid sequence, 146 residues long: uncharacterized protein (146 aa).

This is an uncharacterized protein from Arabidopsis thaliana (Mouse-ear cress).